Here is a 174-residue protein sequence, read N- to C-terminus: Crossover junction endodeoxyribonuclease RuvC (174 aa).

Residues D16, E76, and D148 contribute to the active site. 3 residues coordinate Mg(2+): D16, E76, and D148.

It belongs to the RuvC family. As to quaternary structure, homodimer which binds Holliday junction (HJ) DNA. The HJ becomes 2-fold symmetrical on binding to RuvC with unstacked arms; it has a different conformation from HJ DNA in complex with RuvA. In the full resolvosome a probable DNA-RuvA(4)-RuvB(12)-RuvC(2) complex forms which resolves the HJ. It depends on Mg(2+) as a cofactor.

It is found in the cytoplasm. The catalysed reaction is Endonucleolytic cleavage at a junction such as a reciprocal single-stranded crossover between two homologous DNA duplexes (Holliday junction).. Functionally, the RuvA-RuvB-RuvC complex processes Holliday junction (HJ) DNA during genetic recombination and DNA repair. Endonuclease that resolves HJ intermediates. Cleaves cruciform DNA by making single-stranded nicks across the HJ at symmetrical positions within the homologous arms, yielding a 5'-phosphate and a 3'-hydroxyl group; requires a central core of homology in the junction. The consensus cleavage sequence is 5'-(A/T)TT(C/G)-3'. Cleavage occurs on the 3'-side of the TT dinucleotide at the point of strand exchange. HJ branch migration catalyzed by RuvA-RuvB allows RuvC to scan DNA until it finds its consensus sequence, where it cleaves and resolves the cruciform DNA. The chain is Crossover junction endodeoxyribonuclease RuvC from Rhodopseudomonas palustris (strain ATCC BAA-98 / CGA009).